The chain runs to 688 residues: Coiled-coil domain-containing protein 157 (688 aa).

Residues A143–P153 are compositionally biased toward polar residues. 5 disordered regions span residues A143–S162, A168–S189, Q322–R341, Q366–A385, and Q592–T688. Residues K288 to Q572 adopt a coiled-coil conformation. The segment covering E369–Q382 has biased composition (polar residues). Residues S671–A680 show a composition bias toward low complexity.

In Bos taurus (Bovine), this protein is Coiled-coil domain-containing protein 157 (CCDC157).